A 609-amino-acid polypeptide reads, in one-letter code: Glutamine--fructose-6-phosphate aminotransferase [isomerizing] (609 aa).

Cys2 acts as the Nucleophile; for GATase activity in catalysis. The region spanning 2-218 is the Glutamine amidotransferase type-2 domain; the sequence is CGIVGAIAQR…EGDIAEITRR (217 aa). 2 SIS domains span residues 286–426 and 458–599; these read ADEL…LKGL and LAED…VDQP. The active-site For Fru-6P isomerization activity is Lys604.

As to quaternary structure, homodimer.

Its subcellular location is the cytoplasm. The enzyme catalyses D-fructose 6-phosphate + L-glutamine = D-glucosamine 6-phosphate + L-glutamate. In terms of biological role, catalyzes the first step in hexosamine metabolism, converting fructose-6P into glucosamine-6P using glutamine as a nitrogen source. This is Glutamine--fructose-6-phosphate aminotransferase [isomerizing] from Salmonella typhimurium (strain LT2 / SGSC1412 / ATCC 700720).